The primary structure comprises 245 residues: MPEGPEPLDWTGQALECGACRFQDLLESGHCGLGWSCLNDRYAKRIERFFLLNPELADENLGHPYFETRVQAARTASVFRLPRLLADEDPAVRGMAVLRLPAAHAERLIRDPDRAVRIAVAHRLPPGGLLPMLQDKDGHVRLIVARRAETGMLPMLCADPDPEVRAEVARRIDPAFLDRFRTDPEPLVRRVAARRRPGLFVADDDLRVRHTVAEEGGREELRRLVSDPEDIIRETAIQRLAHLKE.

This is an uncharacterized protein from Rhodobacter capsulatus (Rhodopseudomonas capsulata).